The sequence spans 405 residues: MSSFPAPVLGTPLSPSATRVMLLGSGELGKEVIIALQRLGVEVIAVDRYADAPGHQVAHRAHVVSMTDPAALRAVIEQERPHIIVPEIEAIATDLLVELEQEGVARVTPTARAARLTMNREGIRRLAAETLGLPTSPYQFVDTQDALQQAIDGGIGYPCVIKPVMSSSGKGQSVIRGPGDLDAAWRYAQEGGRVGGGRAIVEGFIDFDYEITLLTVRARGVDGQIETHFCDPIGHKQVDGDYVESWQPHPMSPAALARAREIALGVTGNLGGLGIFGVELFVAGDQVWFSEVSPRPHDTGMVTMITQVQNEFELHARALLGLPVDTALRQPGASSVIYGGLDGRGVTFHGVAQALAEPGTDVRLFGKPEAFVKRRMGVGLAVADTLDAAREKARRVSAAVSVKAA.

N(1)-(5-phospho-beta-D-ribosyl)glycinamide is bound by residues 27–28 and E87; that span reads EL. ATP-binding positions include R120, K162, 167-172, 202-205, and E210; these read SSGKGQ and EGFI. The 196-residue stretch at 125–320 folds into the ATP-grasp domain; it reads RLAAETLGLP…EFELHARALL (196 aa). Positions 279 and 291 each coordinate Mg(2+). N(1)-(5-phospho-beta-D-ribosyl)glycinamide-binding positions include D298, K367, and 374 to 375; that span reads RR.

The protein belongs to the PurK/PurT family. In terms of assembly, homodimer.

It carries out the reaction N(1)-(5-phospho-beta-D-ribosyl)glycinamide + formate + ATP = N(2)-formyl-N(1)-(5-phospho-beta-D-ribosyl)glycinamide + ADP + phosphate + H(+). Its pathway is purine metabolism; IMP biosynthesis via de novo pathway; N(2)-formyl-N(1)-(5-phospho-D-ribosyl)glycinamide from N(1)-(5-phospho-D-ribosyl)glycinamide (formate route): step 1/1. Its function is as follows. Involved in the de novo purine biosynthesis. Catalyzes the transfer of formate to 5-phospho-ribosyl-glycinamide (GAR), producing 5-phospho-ribosyl-N-formylglycinamide (FGAR). Formate is provided by PurU via hydrolysis of 10-formyl-tetrahydrofolate. This is Formate-dependent phosphoribosylglycinamide formyltransferase from Bordetella avium (strain 197N).